Consider the following 379-residue polypeptide: Alcohol dehydrogenase class-2 isozyme 2 (379 aa).

Positions 47, 69, 99, 102, 105, 113, and 176 each coordinate Zn(2+). Residues 205–210 (GLGGVG), Asp-229, Lys-234, 298–300 (VGV), and Arg-374 each bind NAD(+).

It belongs to the zinc-containing alcohol dehydrogenase family. Class-II subfamily. Homodimer. Requires Zn(2+) as cofactor.

The protein resides in the cytoplasm. It catalyses the reaction a primary alcohol + NAD(+) = an aldehyde + NADH + H(+). It carries out the reaction a secondary alcohol + NAD(+) = a ketone + NADH + H(+). This Oryctolagus cuniculus (Rabbit) protein is Alcohol dehydrogenase class-2 isozyme 2 (ADH2-2).